Consider the following 366-residue polypeptide: Isocitrate dehydrogenase [NAD] subunit alpha, mitochondrial (366 aa).

A mitochondrion-targeting transit peptide spans 1 to 27 (MAGPAWISKVSRLLGAFHNPKQVTRGF). An N6-succinyllysine modification is found at lysine 77. Residue threonine 101 is modified to Phosphothreonine. Arginine 115, arginine 125, and arginine 146 together coordinate substrate. Position 223 is an N6-acetyllysine (lysine 223). 3 residues coordinate Mg(2+): aspartate 233, aspartate 257, and aspartate 261. Lysine 343 bears the N6-acetyllysine; alternate mark. Lysine 343 carries the N6-succinyllysine; alternate modification. Lysine 350 bears the N6-succinyllysine mark.

The protein belongs to the isocitrate and isopropylmalate dehydrogenases family. In terms of assembly, heterooligomer of subunits alpha (IDH3A), beta (IDH3B), and gamma (IDH3G) in the apparent ratio of 2:1:1. The heterodimer containing one IDH3A and one IDH3B subunit and the heterodimer containing one IDH3A and one IDH3G subunit assemble into a heterotetramer (which contains two subunits of IDH3A, one of IDH3B and one of IDH3G) and further into the heterooctamer. Mg(2+) serves as cofactor. The cofactor is Mn(2+).

It localises to the mitochondrion. It catalyses the reaction D-threo-isocitrate + NAD(+) = 2-oxoglutarate + CO2 + NADH. Its activity is regulated as follows. The heterotetramer and the heterodimer composed of IDH3A and IDH3G subunits can be allosterically activated by citrate (CIT) or/and ADP, and the two activators can act independently or synergistically. The heterodimer composed of IDH3A and IDH3B subunits cannot be allosterically regulated and the allosteric regulation of the heterotetramer is through the IDH3G subunit and not the IDH3B subunit. The IDH3G subunit contains the allosteric site which consists of a CIT-binding site and an ADP-binding site, and the binding of CIT and ADP causes conformational changes at the allosteric site which are transmitted to the active site in the catalytic subunit (IDH3A) through a cascade of conformational changes at the heterodimer interface, leading to stabilization of the isocitrate-binding at the active site and thus activation of the enzyme. ATP can activate the heterotetramer and the heterodimer composed of IDH3A and IDH3G subunits at low concentrations but inhibits their activities at high concentrations, whereas ATP exhibits only inhibitory effect on the heterodimer composed of IDH3A and IDH3B subunits. Its function is as follows. Catalytic subunit of the enzyme which catalyzes the decarboxylation of isocitrate (ICT) into alpha-ketoglutarate. The heterodimer composed of the alpha (IDH3A) and beta (IDH3B) subunits and the heterodimer composed of the alpha (IDH3A) and gamma (IDH3G) subunits, have considerable basal activity but the full activity of the heterotetramer (containing two subunits of IDH3A, one of IDH3B and one of IDH3G) requires the assembly and cooperative function of both heterodimers. The protein is Isocitrate dehydrogenase [NAD] subunit alpha, mitochondrial of Homo sapiens (Human).